A 581-amino-acid polypeptide reads, in one-letter code: Alpha-amylase 2 (581 aa).

The N-terminal stretch at 1–24 is a signal peptide; that stretch reads MNYRRNICLRIGWMLLFAFIPAYA. Cys56 and Cys64 are disulfide-bonded. Trp109 provides a ligand contact to substrate. Residue Asn147 participates in Ca(2+) binding. A disulfide bond links Cys176 and Cys191. Asp202 serves as a coordination point for Ca(2+). Arg231 contacts substrate. Positions 233, 237, and 257 each coordinate Ca(2+). The Nucleophile role is filled by Asp233. 236-237 is a binding site for substrate; that stretch reads KH. Glu257 acts as the Proton donor in catalysis. Gly261 lines the substrate pocket. Cysteines 267 and 311 form a disulfide. A glycan (N-linked (GlcNAc...) asparagine) is linked at Asn291. Asp325 provides a ligand contact to substrate. N-linked (GlcNAc...) asparagine glycosylation occurs at Asn332. A substrate-binding site is contributed by Arg372. A lipid anchor (GPI-anchor amidated serine) is attached at Ser551. Residues 552–581 constitute a propeptide, removed in mature form; sequence EAKTIRSFTKLKLFILLIAVPFALPMIILI.

It belongs to the glycosyl hydrolase 13 family. Requires Ca(2+) as cofactor.

Its subcellular location is the cell membrane. It catalyses the reaction Endohydrolysis of (1-&gt;4)-alpha-D-glucosidic linkages in polysaccharides containing three or more (1-&gt;4)-alpha-linked D-glucose units.. The protein is Alpha-amylase 2 (aah2) of Schizosaccharomyces pombe (strain 972 / ATCC 24843) (Fission yeast).